The chain runs to 120 residues: NAD(P)H-quinone oxidoreductase subunit 3, chloroplastic (120 aa).

3 helical membrane passes run 9–29 (IFWAFLLISSAIPVLAFLISG), 64–84 (MFALVFVVFDVETVFLYPWAM), and 88–108 (VLGVSAFIEAFIFVLILILGL).

The protein belongs to the complex I subunit 3 family. In terms of assembly, NDH is composed of at least 16 different subunits, 5 of which are encoded in the nucleus.

The protein resides in the plastid. The protein localises to the chloroplast thylakoid membrane. It catalyses the reaction a plastoquinone + NADH + (n+1) H(+)(in) = a plastoquinol + NAD(+) + n H(+)(out). The enzyme catalyses a plastoquinone + NADPH + (n+1) H(+)(in) = a plastoquinol + NADP(+) + n H(+)(out). Its function is as follows. NDH shuttles electrons from NAD(P)H:plastoquinone, via FMN and iron-sulfur (Fe-S) centers, to quinones in the photosynthetic chain and possibly in a chloroplast respiratory chain. The immediate electron acceptor for the enzyme in this species is believed to be plastoquinone. Couples the redox reaction to proton translocation, and thus conserves the redox energy in a proton gradient. The protein is NAD(P)H-quinone oxidoreductase subunit 3, chloroplastic of Arabidopsis thaliana (Mouse-ear cress).